The primary structure comprises 256 residues: Imidazole glycerol phosphate synthase subunit HisF (256 aa).

Residues aspartate 11 and aspartate 130 contribute to the active site.

This sequence belongs to the HisA/HisF family. Heterodimer of HisH and HisF.

It is found in the cytoplasm. The enzyme catalyses 5-[(5-phospho-1-deoxy-D-ribulos-1-ylimino)methylamino]-1-(5-phospho-beta-D-ribosyl)imidazole-4-carboxamide + L-glutamine = D-erythro-1-(imidazol-4-yl)glycerol 3-phosphate + 5-amino-1-(5-phospho-beta-D-ribosyl)imidazole-4-carboxamide + L-glutamate + H(+). It participates in amino-acid biosynthesis; L-histidine biosynthesis; L-histidine from 5-phospho-alpha-D-ribose 1-diphosphate: step 5/9. Its function is as follows. IGPS catalyzes the conversion of PRFAR and glutamine to IGP, AICAR and glutamate. The HisF subunit catalyzes the cyclization activity that produces IGP and AICAR from PRFAR using the ammonia provided by the HisH subunit. In Methylocella silvestris (strain DSM 15510 / CIP 108128 / LMG 27833 / NCIMB 13906 / BL2), this protein is Imidazole glycerol phosphate synthase subunit HisF.